Consider the following 252-residue polypeptide: Probable transcriptional regulatory protein Bcav_1989 (252 aa).

It belongs to the TACO1 family.

The protein resides in the cytoplasm. The sequence is that of Probable transcriptional regulatory protein Bcav_1989 from Beutenbergia cavernae (strain ATCC BAA-8 / DSM 12333 / CCUG 43141 / JCM 11478 / NBRC 16432 / NCIMB 13614 / HKI 0122).